The following is a 297-amino-acid chain: Carbamate kinase (297 aa).

Belongs to the carbamate kinase family.

Its subcellular location is the cytoplasm. It catalyses the reaction hydrogencarbonate + NH4(+) + ATP = carbamoyl phosphate + ADP + H2O + H(+). The catalysed reaction is carbamate + ATP = carbamoyl phosphate + ADP. The enzyme catalyses hydrogencarbonate + NH4(+) = carbamate + H2O + H(+). Its pathway is nitrogen metabolism; (S)-allantoin degradation. Its function is as follows. Kinase involved in the anaerobic nitrogen utilization via the assimilation of allantoin. Catalyzes the transfer of a phosphate group from carbamoyl phosphate to ADP to produce ATP and leave carbamate, which spontaneously hydrolyzes to ammonia and hydrogencarbonate. The chain is Carbamate kinase from Escherichia coli O6:H1 (strain CFT073 / ATCC 700928 / UPEC).